Reading from the N-terminus, the 67-residue chain is DNA-directed RNA polymerase subunit omega (67 aa).

It belongs to the RNA polymerase subunit omega family. As to quaternary structure, the RNAP catalytic core consists of 2 alpha, 1 beta, 1 beta' and 1 omega subunit. When a sigma factor is associated with the core the holoenzyme is formed, which can initiate transcription.

The catalysed reaction is RNA(n) + a ribonucleoside 5'-triphosphate = RNA(n+1) + diphosphate. In terms of biological role, promotes RNA polymerase assembly. Latches the N- and C-terminal regions of the beta' subunit thereby facilitating its interaction with the beta and alpha subunits. The polypeptide is DNA-directed RNA polymerase subunit omega (Ralstonia nicotianae (strain ATCC BAA-1114 / GMI1000) (Ralstonia solanacearum)).